We begin with the raw amino-acid sequence, 103 residues long: Small ribosomal subunit protein uS14c (103 aa).

This sequence belongs to the universal ribosomal protein uS14 family. As to quaternary structure, part of the 30S ribosomal subunit.

It localises to the plastid. It is found in the chloroplast. In terms of biological role, binds 16S rRNA, required for the assembly of 30S particles. This Agrostis stolonifera (Creeping bentgrass) protein is Small ribosomal subunit protein uS14c.